The primary structure comprises 94 residues: Large ribosomal subunit protein uL23c (94 aa).

It belongs to the universal ribosomal protein uL23 family. As to quaternary structure, part of the 50S ribosomal subunit.

It localises to the plastid. The protein localises to the chloroplast. Binds to 23S rRNA. The sequence is that of Large ribosomal subunit protein uL23c (rpl23) from Tupiella akineta (Green alga).